Here is a 252-residue protein sequence, read N- to C-terminus: Small ribosomal subunit protein uS2 (252 aa).

The protein belongs to the universal ribosomal protein uS2 family.

The protein is Small ribosomal subunit protein uS2 of Alcanivorax borkumensis (strain ATCC 700651 / DSM 11573 / NCIMB 13689 / SK2).